The chain runs to 144 residues: uncharacterized protein (144 aa).

The next 4 membrane-spanning stretches (helical) occupy residues 16–36, 48–68, 87–107, and 120–140; these read FLIF…GAIF, GFIV…ALII, LLPE…LVLL, and VMSL…WYFG.

The protein localises to the cell membrane. This is an uncharacterized protein from Methanocaldococcus jannaschii (strain ATCC 43067 / DSM 2661 / JAL-1 / JCM 10045 / NBRC 100440) (Methanococcus jannaschii).